The chain runs to 313 residues: Aspartate carbamoyltransferase catalytic subunit (313 aa).

Carbamoyl phosphate is bound by residues R53 and T54. Residue K82 participates in L-aspartate binding. The carbamoyl phosphate site is built by R103, H131, and Q134. R163 and R224 together coordinate L-aspartate. Residues L263 and P264 each coordinate carbamoyl phosphate.

This sequence belongs to the aspartate/ornithine carbamoyltransferase superfamily. ATCase family. As to quaternary structure, heterooligomer of catalytic and regulatory chains.

The enzyme catalyses carbamoyl phosphate + L-aspartate = N-carbamoyl-L-aspartate + phosphate + H(+). The protein operates within pyrimidine metabolism; UMP biosynthesis via de novo pathway; (S)-dihydroorotate from bicarbonate: step 2/3. Catalyzes the condensation of carbamoyl phosphate and aspartate to form carbamoyl aspartate and inorganic phosphate, the committed step in the de novo pyrimidine nucleotide biosynthesis pathway. In Halorubrum lacusprofundi (strain ATCC 49239 / DSM 5036 / JCM 8891 / ACAM 34), this protein is Aspartate carbamoyltransferase catalytic subunit.